A 63-amino-acid chain; its full sequence is Large ribosomal subunit protein bL28 (63 aa).

Belongs to the bacterial ribosomal protein bL28 family.

The sequence is that of Large ribosomal subunit protein bL28 from Thermomicrobium roseum (strain ATCC 27502 / DSM 5159 / P-2).